The sequence spans 198 residues: RNA-free ribonuclease P (198 aa).

Belongs to the HARP family.

The catalysed reaction is Endonucleolytic cleavage of RNA, removing 5'-extranucleotides from tRNA precursor.. Its function is as follows. RNA-free RNase P that catalyzes the removal of the 5'-leader sequence from pre-tRNA to produce the mature 5'-terminus. The protein is RNA-free ribonuclease P of Nitrosococcus oceani (strain ATCC 19707 / BCRC 17464 / JCM 30415 / NCIMB 11848 / C-107).